We begin with the raw amino-acid sequence, 128 residues long: Protein Wnt-8 (128 aa).

Ser1 is lipidated: O-palmitoleoyl serine. Disulfide bonds link Cys69–Cys109 and Cys85–Cys102. N-linked (GlcNAc...) asparagine glycosylation occurs at Asn72.

Belongs to the Wnt family. In terms of processing, palmitoleoylation is required for efficient binding to frizzled receptors. Depalmitoleoylation leads to Wnt signaling pathway inhibition. Post-translationally, proteolytic processing by tiki1 and tiki2 promotes oxidation and formation of large disulfide-bond oligomers, leading to inactivation of wnt8.

The protein resides in the secreted. It is found in the extracellular space. Its subcellular location is the extracellular matrix. Ligand for members of the frizzled family of seven transmembrane receptors. Probable developmental protein. May be a signaling molecule which affects the development of discrete regions of tissues. Is likely to signal over only few cell diameters. The protein is Protein Wnt-8 (WNT-8) of Evasterias troschelii (Mottled sea star).